The primary structure comprises 344 residues: MACAVFQIPPWHLDRKYGSCSTILLDNSTASQPDLRHTLERYANRSLAIFEEPVHPLPQEKLPGKSFKHDPKRNCIFRHFCTLFQVIKLTAPCAIVALVYIKRLLTSANIDLCPTNWKKIVLGTMLLASKVWRNHGLWSVDDSQNSKDTAVENMSKMEKCFLELLEFNIHVSASVYAKYYFDLCALANDHDLYFLFSFLHKDKAQKLEGHTSQHSLSLGPCRVGMENYATYSPLSSQPVLGALSLAEVLPQEIKQEIHQVLMDHGVPCHYTCFLLHPEDSTLERFLVLHSIQGLQEDSVLCKVEIHGLSPQPQTYQSHFRSPSLAELLNRISGTCRNHFAGMQK.

Positions 40-170 constitute a Cyclin N-terminal domain; that stretch reads ERYANRSLAI…FLELLEFNIH (131 aa).

The protein belongs to the cyclin family. Cyclin Y subfamily.

The sequence is that of Putative cyclin-Y-like protein 3 (CCNYL3) from Homo sapiens (Human).